The chain runs to 424 residues: Probable carboxypeptidase AN5749 (424 aa).

An N-terminal signal peptide occupies residues 1–17 (MNLSILAALALVSFSTA). N-linked (GlcNAc...) asparagine glycosylation is present at Asn58. Zn(2+) is bound at residue Asp139. Glu171 serves as the catalytic Proton acceptor. Glu172 provides a ligand contact to Zn(2+). Asn184 and Asn323 each carry an N-linked (GlcNAc...) asparagine glycan.

Belongs to the peptidase M20A family. Zn(2+) is required as a cofactor.

It localises to the secreted. The sequence is that of Probable carboxypeptidase AN5749 from Emericella nidulans (strain FGSC A4 / ATCC 38163 / CBS 112.46 / NRRL 194 / M139) (Aspergillus nidulans).